The chain runs to 110 residues: Phosphoribosyl-ATP pyrophosphatase (110 aa).

The protein belongs to the PRA-PH family.

It is found in the cytoplasm. It carries out the reaction 1-(5-phospho-beta-D-ribosyl)-ATP + H2O = 1-(5-phospho-beta-D-ribosyl)-5'-AMP + diphosphate + H(+). It functions in the pathway amino-acid biosynthesis; L-histidine biosynthesis; L-histidine from 5-phospho-alpha-D-ribose 1-diphosphate: step 2/9. The sequence is that of Phosphoribosyl-ATP pyrophosphatase from Pseudomonas savastanoi pv. phaseolicola (strain 1448A / Race 6) (Pseudomonas syringae pv. phaseolicola (strain 1448A / Race 6)).